Here is a 380-residue protein sequence, read N- to C-terminus: Lipid-A-disaccharide synthase (380 aa).

This sequence belongs to the LpxB family.

The enzyme catalyses a lipid X + a UDP-2-N,3-O-bis[(3R)-3-hydroxyacyl]-alpha-D-glucosamine = a lipid A disaccharide + UDP + H(+). Its pathway is bacterial outer membrane biogenesis; LPS lipid A biosynthesis. Condensation of UDP-2,3-diacylglucosamine and 2,3-diacylglucosamine-1-phosphate to form lipid A disaccharide, a precursor of lipid A, a phosphorylated glycolipid that anchors the lipopolysaccharide to the outer membrane of the cell. In Pseudomonas syringae pv. tomato (strain ATCC BAA-871 / DC3000), this protein is Lipid-A-disaccharide synthase.